The primary structure comprises 274 residues: Dermonecrotic toxin SdSicTox-betaIIB1biv (274 aa).

His5 is a catalytic residue. Mg(2+) contacts are provided by Glu25 and Asp27. The active-site Nucleophile is the His41. Disulfide bonds link Cys45–Cys51 and Cys47–Cys190. Asp85 is a binding site for Mg(2+).

Belongs to the arthropod phospholipase D family. Class II subfamily. The cofactor is Mg(2+). In terms of tissue distribution, expressed by the venom gland.

The protein localises to the secreted. It catalyses the reaction an N-(acyl)-sphingosylphosphocholine = an N-(acyl)-sphingosyl-1,3-cyclic phosphate + choline. The catalysed reaction is an N-(acyl)-sphingosylphosphoethanolamine = an N-(acyl)-sphingosyl-1,3-cyclic phosphate + ethanolamine. It carries out the reaction a 1-acyl-sn-glycero-3-phosphocholine = a 1-acyl-sn-glycero-2,3-cyclic phosphate + choline. The enzyme catalyses a 1-acyl-sn-glycero-3-phosphoethanolamine = a 1-acyl-sn-glycero-2,3-cyclic phosphate + ethanolamine. Functionally, dermonecrotic toxins cleave the phosphodiester linkage between the phosphate and headgroup of certain phospholipids (sphingolipid and lysolipid substrates), forming an alcohol (often choline) and a cyclic phosphate. This toxin acts on sphingomyelin (SM). It may also act on ceramide phosphoethanolamine (CPE), lysophosphatidylcholine (LPC) and lysophosphatidylethanolamine (LPE), but not on lysophosphatidylserine (LPS), and lysophosphatidylglycerol (LPG). It acts by transphosphatidylation, releasing exclusively cyclic phosphate products as second products. Induces dermonecrosis, hemolysis, increased vascular permeability, edema, inflammatory response, and platelet aggregation. In Sicarius cf. damarensis (strain GJB-2008) (Six-eyed sand spider), this protein is Dermonecrotic toxin SdSicTox-betaIIB1biv.